A 422-amino-acid chain; its full sequence is Validoxylamine A glucosyltransferase (422 aa).

It belongs to the glycosyltransferase 2 family. Mn(2+) serves as cofactor.

It carries out the reaction validoxylamine A + UDP-alpha-D-glucose = validamycin A + UDP + H(+). Its function is as follows. Involved in the biosynthesis of the antifungal agent validamycin A. Catalyzes the final attachment of glucose from UDP-alpha-D-glucose to validoxylamine A to yield validamycin A. UDP-glucose is the most efficient glycosyl donor, whereas GDP-glucose and ADP-glucose are much less efficient. ValG also utilizes UDP-galactose as substrate to produce the new validamycin analog, 4''-epi-validamycin A. In Streptomyces hygroscopicus subsp. jinggangensis (strain 5008), this protein is Validoxylamine A glucosyltransferase.